An 870-amino-acid chain; its full sequence is S-linalool synthase (870 aa).

Mg(2+) contacts are provided by D547, D551, N689, S693, and E697. The DDXXD motif motif lies at 547-551 (DDFFD).

This sequence belongs to the terpene synthase family. Mg(2+) serves as cofactor. It depends on Mn(2+) as a cofactor. Highly expressed in cells of the transmitting tract of the stigma and style and in the epidermal cells of petals, as well as in stamens.

The enzyme catalyses (2E)-geranyl diphosphate + H2O = (S)-linalool + diphosphate. In terms of biological role, involved in the biosynthesis of the acyclic monoterpene S-linalool, a major component of the strong sweet scent of the C.breweri flowers. The sequence is that of S-linalool synthase (LIS) from Clarkia breweri (Fairy fans).